Consider the following 651-residue polypeptide: MSDKIHPVPKQVKAQALIDKEKYLKWYEESVENPDKFWGKHGKRIDWFKPYTKVKNTSFTGKVSIKWFEDGQTNVSYNCIDRHLKTNGDQVAIIWEGDNPYIDKKITYNELYEHVCRMANVLKKHGVKKGDRVTIYMPMIPEAAYAMLACARIGAVHSVVFGGFSPEALAGRIVDCESTFVITCDEGLRGGKPVPLKDNTDTAIHIAARQHVHVSKVLVVRRTGGKTGWAPGRDLWYHQEVATVKAECPPVKMKAEDPLFILYTSGSTGKPKGVLHTTGGYLVYASMTHEYVFDYHHGDIYWCTADVGWVTGHSYIVYGPLANCATTLMFEGVPNFPDQGRFWEVIDKHKVNIFYTAPTAIRSLMGAGDDFVTRSSRSSLRLLGTVGEPINPEAWEWYYNVVGDKRCPVIDTWWQTETGGHMITPLPGAIDLKPGSATVPFFGVKPQLVDNEGKVLEGAADGNLCITDSWPGQMRTVYGDHERFIQTYFSTYKGKYFTGDGCRRDEDGYYWITGRVDDVLNVSGHRLGTAEVESALVSHNLVSEAAVVGYPHAIKGQGIYCYVTLMAGHEGTDTLRQELVKHVRAEIGPIASPDKIQFAPGLPKTRSGKIMRRILRKIAEDDFGALGDTSTLADPAVVDDLIANRQNKATA.

Residues 189–192 (RGGK), Thr311, and Asn335 contribute to the CoA site. ATP contacts are provided by residues 387 to 389 (GEP), 411 to 416 (DTWWQT), Asp500, and Arg515. A CoA-binding site is contributed by Ser523. Residue Arg526 participates in ATP binding. 3 residues coordinate Mg(2+): Val537, His539, and Val542. Arg584 provides a ligand contact to CoA. Lys609 carries the post-translational modification N6-acetyllysine.

The protein belongs to the ATP-dependent AMP-binding enzyme family. Mg(2+) serves as cofactor. In terms of processing, acetylated. Deacetylation by the SIR2-homolog deacetylase activates the enzyme.

It carries out the reaction acetate + ATP + CoA = acetyl-CoA + AMP + diphosphate. Its function is as follows. Catalyzes the conversion of acetate into acetyl-CoA (AcCoA), an essential intermediate at the junction of anabolic and catabolic pathways. AcsA undergoes a two-step reaction. In the first half reaction, AcsA combines acetate with ATP to form acetyl-adenylate (AcAMP) intermediate. In the second half reaction, it can then transfer the acetyl group from AcAMP to the sulfhydryl group of CoA, forming the product AcCoA. The polypeptide is Acetyl-coenzyme A synthetase (Rhizobium etli (strain CIAT 652)).